Consider the following 250-residue polypeptide: MRQDGRKQNQLREVEIIPHFTKHAEGSVLISVGDTKVICTASIENRVPPFLRGQNKGWLAAEYSMLPRATGQRTIREAAKGKLSGRTMEIQRLIGRALRAVVDLEKLGEKTIWIDCDVIQADGGTRTASITGAYVALVLAVQKAFAEKTISAWPITDFLAAISVGILPEEGAVCDLCYSEDSQAKVDMNIVQTGSGDFVEVQGSGEEAVYTRSELNELLDLAAEGIDQLIHIQRPFLGEAASWIEEKKGT.

Phosphate-binding positions include arginine 86 and 124–126 (GTR).

This sequence belongs to the RNase PH family. In terms of assembly, homohexameric ring arranged as a trimer of dimers.

It carries out the reaction tRNA(n+1) + phosphate = tRNA(n) + a ribonucleoside 5'-diphosphate. Functionally, phosphorolytic 3'-5' exoribonuclease that plays an important role in tRNA 3'-end maturation. Removes nucleotide residues following the 3'-CCA terminus of tRNAs; can also add nucleotides to the ends of RNA molecules by using nucleoside diphosphates as substrates, but this may not be physiologically important. Probably plays a role in initiation of 16S rRNA degradation (leading to ribosome degradation) during starvation. The polypeptide is Ribonuclease PH (Shouchella clausii (strain KSM-K16) (Alkalihalobacillus clausii)).